Here is a 160-residue protein sequence, read N- to C-terminus: Ribosomal RNA large subunit methyltransferase H (160 aa).

Residues Leu76, Gly108, and Phe127–Trp132 each bind S-adenosyl-L-methionine.

The protein belongs to the RNA methyltransferase RlmH family. Homodimer.

The protein localises to the cytoplasm. The catalysed reaction is pseudouridine(1915) in 23S rRNA + S-adenosyl-L-methionine = N(3)-methylpseudouridine(1915) in 23S rRNA + S-adenosyl-L-homocysteine + H(+). Functionally, specifically methylates the pseudouridine at position 1915 (m3Psi1915) in 23S rRNA. The polypeptide is Ribosomal RNA large subunit methyltransferase H (Bartonella tribocorum (strain CIP 105476 / IBS 506)).